The sequence spans 453 residues: Serine/threonine-protein phosphatase 2A 55 kDa regulatory subunit B delta isoform (453 aa).

WD repeat units lie at residues A32–A71, E97–E138, A181–N219, and E230–R270. At S285 the chain carries Phosphoserine. WD repeat units follow at residues E289 to E327, E344 to L385, and D420 to I452. Y305 carries the post-translational modification Phosphotyrosine. Residue T308 is modified to Phosphothreonine. Residues L385–G406 form a disordered region.

It belongs to the phosphatase 2A regulatory subunit B family. PP2A consists of a common heterodimeric core enzyme, composed of a 36 kDa catalytic subunit (subunit C) and a 65 kDa constant regulatory subunit (PR65 or subunit A), that associates with a variety of regulatory subunits. Proteins that associate with the core dimer include three families of regulatory subunits B (the R2/B/PR55/B55, R3/B''/PR72/PR130/PR59 and R5/B'/B56 families), the 48 kDa variable regulatory subunit, viral proteins, and cell signaling molecules. Interacts with ENSA (when phosphorylated at 'Ser-67') and ARPP19 (when phosphorylated at 'Ser-62'), leading to inhibit PP2A activity. Interacts with IER5. Widely expressed with high levels in brain, heart, placenta, skeletal muscle, testis, thymus and spleen.

It localises to the cytoplasm. Functionally, substrate-recognition subunit of protein phosphatase 2A (PP2A) that plays a key role in cell cycle by controlling mitosis entry and exit. Involved in chromosome clustering during late mitosis by mediating dephosphorylation of MKI67. The activity of PP2A complexes containing PPP2R2D (PR55-delta) fluctuate during the cell cycle: the activity is high in interphase and low in mitosis. This is Serine/threonine-protein phosphatase 2A 55 kDa regulatory subunit B delta isoform (Ppp2r2d) from Rattus norvegicus (Rat).